The following is a 173-amino-acid chain: MKTWHMVVVIGFLATLAQTSLALKEEDCEVCVKTVRRFADSLDDSTKKDYKQIETVFKKFCKTQKNKEHRFCYYLGGLEESATGILNELSKPLSWSMPAEKICEKLKKKDAQICDLRYEKQIDLNSVDLKKLKVRDLKKILNDWDESCDGCLEKGDFIKRIEELKPKYSRSEL.

The N-terminal stretch at Met-1–Ala-22 is a signal peptide. 4 disulfide bridges follow: Cys-28–Cys-114, Cys-31–Cys-103, Cys-61–Cys-72, and Cys-148–Cys-151.

It belongs to the ARMET family.

It is found in the secreted. Functionally, required during the maturation of the embryonic nervous system for maintenance of neuronal and cuticular connectivity. Essential for maintenance of dopaminergic neurons and dopamine levels. This chain is Mesencephalic astrocyte-derived neurotrophic factor homolog, found in Drosophila sechellia (Fruit fly).